The chain runs to 116 residues: Large ribosomal subunit protein bL17 (116 aa).

The protein belongs to the bacterial ribosomal protein bL17 family. In terms of assembly, part of the 50S ribosomal subunit. Contacts protein L32.

The protein is Large ribosomal subunit protein bL17 of Prochlorococcus marinus (strain MIT 9303).